The following is a 260-amino-acid chain: Hydroxyethylthiazole kinase 1 (260 aa).

Met-39 is a substrate binding site. The ATP site is built by Arg-115 and Thr-160. Gly-187 is a binding site for substrate.

This sequence belongs to the Thz kinase family. It depends on Mg(2+) as a cofactor.

The enzyme catalyses 5-(2-hydroxyethyl)-4-methylthiazole + ATP = 4-methyl-5-(2-phosphooxyethyl)-thiazole + ADP + H(+). It participates in cofactor biosynthesis; thiamine diphosphate biosynthesis; 4-methyl-5-(2-phosphoethyl)-thiazole from 5-(2-hydroxyethyl)-4-methylthiazole: step 1/1. Catalyzes the phosphorylation of the hydroxyl group of 4-methyl-5-beta-hydroxyethylthiazole (THZ). This Streptococcus pneumoniae (strain Hungary19A-6) protein is Hydroxyethylthiazole kinase 1.